A 915-amino-acid chain; its full sequence is Alpha-xylosidase 1 (915 aa).

A signal peptide spans 1–27 (MASSSSSLAFSLSLLLALILCFSPTQS). N-linked (GlcNAc...) asparagine glycosylation is found at N153, N304, and N375. Active-site residues include D440 and E443. 2 N-linked (GlcNAc...) asparagine glycosylation sites follow: N476 and N490. The active-site Proton donor is the D563. N819, N888, and N907 each carry an N-linked (GlcNAc...) asparagine glycan.

This sequence belongs to the glycosyl hydrolase 31 family. Expressed in roots, stems, leaves, flowers and siliques. Expressed in cell types undergoing cell wall modifications, including trichomes, vasculature, stomata, and elongating anther filaments. Not detected in pollen.

It is found in the secreted. The protein localises to the cell wall. The protein resides in the extracellular space. Its subcellular location is the apoplast. The enzyme catalyses Hydrolysis of terminal, non-reducing alpha-D-xylose residues with release of alpha-D-xylose.. Its function is as follows. Glycoside hydrolase releasing xylosyl residues from xyloglucan oligosaccharides at the non-reducing end. Has alpha-xylosidase activity against xylan oligosaccharides. Also has alpha-glucosidase activity against p-nitrophenyl-alpha-D-glucopyranoside. No activity against p-nitrophenyl-D-xyloside. The polypeptide is Alpha-xylosidase 1 (Arabidopsis thaliana (Mouse-ear cress)).